Reading from the N-terminus, the 155-residue chain is Deoxyuridine 5'-triphosphate nucleotidohydrolase (155 aa).

Residues 72 to 74 (RSG), N85, 89 to 91 (TVD), and K99 each bind substrate.

This sequence belongs to the dUTPase family. The cofactor is Mg(2+).

The enzyme catalyses dUTP + H2O = dUMP + diphosphate + H(+). It participates in pyrimidine metabolism; dUMP biosynthesis; dUMP from dCTP (dUTP route): step 2/2. Functionally, this enzyme is involved in nucleotide metabolism: it produces dUMP, the immediate precursor of thymidine nucleotides and it decreases the intracellular concentration of dUTP so that uracil cannot be incorporated into DNA. The sequence is that of Deoxyuridine 5'-triphosphate nucleotidohydrolase from Parvibaculum lavamentivorans (strain DS-1 / DSM 13023 / NCIMB 13966).